The sequence spans 334 residues: Serine racemase (334 aa).

Glu-13 is a binding site for Mg(2+). The ATP site is built by Ser-31, Ser-32, Ile-33, Lys-51, and Thr-52. Catalysis depends on proton acceptor residues Lys-56 and Ser-84. Position 56 is an N6-(pyridoxal phosphate)lysine (Lys-56). Asn-86 lines the pyridoxal 5'-phosphate pocket. Position 89 (Gln-89) interacts with ATP. The residue at position 113 (Cys-113) is an S-nitrosocysteine. Tyr-121 serves as a coordination point for ATP. Pyridoxal 5'-phosphate is bound at residue Asn-154. Asp-178 provides a ligand contact to Mg(2+). Gly-185, Gly-186, Gly-187, Gly-188, and Met-189 together coordinate pyridoxal 5'-phosphate. Mg(2+)-binding residues include Glu-210, Ala-214, Asp-216, and Asn-247. Ca(2+) contacts are provided by Glu-210, Ala-214, Asp-216, and Asn-247. The Mn(2+) site is built by Glu-210, Ala-214, and Asp-216. An ATP-binding site is contributed by Lys-279. Ser-313 lines the pyridoxal 5'-phosphate pocket. Asn-316 is an ATP binding site.

This sequence belongs to the serine/threonine dehydratase family. Homodimer. It depends on Mg(2+) as a cofactor. Mn(2+) is required as a cofactor. The cofactor is Ca(2+). Requires pyridoxal 5'-phosphate as cofactor. Post-translationally, S-nitrosylated, leading to decrease the enzyme activity.

The catalysed reaction is L-serine = D-serine. It catalyses the reaction L-serine = pyruvate + NH4(+). It carries out the reaction D-serine = pyruvate + NH4(+). Functionally, catalyzes the synthesis of D-serine from L-serine. D-serine is a key coagonist with glutamate at NMDA receptors. Has dehydratase activity towards both L-serine and D-serine. The polypeptide is Serine racemase (SRR) (Bos taurus (Bovine)).